A 299-amino-acid chain; its full sequence is MKVHEKVSELIGNTPIIHLKKFGINVFAKCEFLNPSHSIKDRAAFEMIKDALDSKKINQDTTIVEATSGNTGISLAMICADLGLKFIAVMPESMSLERRKMITLFGARLELTPANLGMKGAVDKANEILLNTPNSFMVSQFENISNKNAHRKNTALEILRDLDNELDIFVAGFGTGGTISGVGEILKEKLEKVHIVGVEPLNSPLLSKGEAGSHKIQGIGANFIPAILNKEVIDEVITVSNEDAINTAKELAKSGLMVGISSGANVFAASMLAKKFPDKRILTMLNDTAERYLSTDLFA.

Lysine 40 carries the N6-(pyridoxal phosphate)lysine modification. Residues asparagine 70, 174 to 178, and serine 261 each bind pyridoxal 5'-phosphate; that span reads GTGGT.

The protein belongs to the cysteine synthase/cystathionine beta-synthase family. Requires pyridoxal 5'-phosphate as cofactor.

It carries out the reaction O-acetyl-L-serine + hydrogen sulfide = L-cysteine + acetate. Its pathway is amino-acid biosynthesis; L-cysteine biosynthesis; L-cysteine from L-serine: step 2/2. The protein is Cysteine synthase B (cysM) of Campylobacter jejuni subsp. jejuni serotype O:2 (strain ATCC 700819 / NCTC 11168).